Reading from the N-terminus, the 1583-residue chain is Dynamin-binding protein (1583 aa).

M1 is subject to N-acetylmethionine. SH3 domains are found at residues 2–61, 66–126, 145–204, and 243–302; these read EAGS…IVTI, EGER…ELCL, YSMG…LLGP, and QPGT…LFSK. Disordered stretches follow at residues 217-244, 306-329, and 366-464; these read HNDC…EEQP, EETM…DCRE, and ECEV…RGMY. Residues 224–243 show a composition bias toward acidic residues; it reads GEEETPTGEEERGPEEDEEQ. Residues 366 to 379 show a composition bias toward basic and acidic residues; the sequence is ECEVHKSSHQDEGT. A compositionally biased stretch (polar residues) spans 406–442; it reads ETINGVSSQSQVPFRPRWQQNQYYSTTGRGHLSTEQY. The residue at position 495 (S495) is a Phosphoserine. Disordered regions lie at residues 594-656 and 671-693; these read RGSS…PSAQ and LFTH…QTLD. Positions 637-653 are enriched in pro residues; the sequence is PEPPLAMRPSRPAPLPP. A compositionally biased stretch (basic and acidic residues) spans 675–685; the sequence is ESCESPEKEGP. Residues 742–762 adopt a coiled-coil conformation; sequence LEFYESNIESLNMELQQLREM. Residues 791-974 form the DH domain; the sequence is KRAKVIEELL…KEINVNINEY (184 aa). In terms of domain architecture, BAR spans 1015–1224; it reads LKHLTGFAPQ…LKVAGREGNL (210 aa). One can recognise an SH3 5 domain in the interval 1292-1355; that stretch reads PPEKLFQAER…YSSFLKPYNT (64 aa). The interval 1357-1496 is disordered; the sequence is RSHSDVSVGS…GRNGQGKDLT (140 aa). Low complexity predominate over residues 1361 to 1387; the sequence is DVSVGSHSSTESEQSSSSPRFPRQNSS. Positions 1388 to 1414 are enriched in polar residues; the sequence is GTLTFNPGSMAVSFTSGSCQKQPQDAT. Low complexity predominate over residues 1433–1456; the sequence is SESSPSRCPSDPDSSPQPRSWDSP. Residues 1519–1582 enclose the SH3 6 domain; that stretch reads EGNQVYFAVY…PSNYIRKAEY (64 aa).

As to quaternary structure, binds DNM1 via its N-terminal SH3 domains. The C-terminal SH3 domain binds a complex containing actin, tubulin, Hsp70 and actin-regulatory proteins, such as ENAH, EVL, WIRE, CR16, WAVE1 and NAP1L1. Interacts with FASLG. Interacts (via SH3 domain 6) with WASL. Interacts (via SH3 domain 6) interacts with ENAH. Interacts (via C-terminal domain) with TJP1; required for the apical cell-cell junction localization of DNMBP.

Its subcellular location is the cytoplasm. The protein localises to the golgi apparatus. The protein resides in the golgi stack. It is found in the cytoskeleton. It localises to the synapse. Its subcellular location is the cell junction. Functionally, plays a critical role as a guanine nucleotide exchange factor (GEF) for CDC42 in several intracellular processes associated with the actin and microtubule cytoskeleton. Regulates the structure of apical junctions in epithelial cells. Participates in the normal lumenogenesis of epithelial cell cysts by regulating spindle orientation. Plays a key role in ciliogenesis and cyst formation. May play a role in membrane trafficking between the cell surface and the Golgi. This Canis lupus familiaris (Dog) protein is Dynamin-binding protein.